Reading from the N-terminus, the 510-residue chain is NAD(P)H-quinone oxidoreductase subunit 2, chloroplastic (510 aa).

11 helical membrane passes run Leu24–Leu44, Trp59–Trp79, Ile99–Ile119, Met124–Cys144, Leu149–Tyr169, Tyr183–Gly203, Trp295–Ile315, Met323–Asp343, Gly347–Ala367, Ala395–Phe415, and Leu418–Leu438.

It belongs to the complex I subunit 2 family. In terms of assembly, NDH is composed of at least 16 different subunits, 5 of which are encoded in the nucleus.

Its subcellular location is the plastid. It localises to the chloroplast thylakoid membrane. It carries out the reaction a plastoquinone + NADH + (n+1) H(+)(in) = a plastoquinol + NAD(+) + n H(+)(out). The catalysed reaction is a plastoquinone + NADPH + (n+1) H(+)(in) = a plastoquinol + NADP(+) + n H(+)(out). In terms of biological role, NDH shuttles electrons from NAD(P)H:plastoquinone, via FMN and iron-sulfur (Fe-S) centers, to quinones in the photosynthetic chain and possibly in a chloroplast respiratory chain. The immediate electron acceptor for the enzyme in this species is believed to be plastoquinone. Couples the redox reaction to proton translocation, and thus conserves the redox energy in a proton gradient. This is NAD(P)H-quinone oxidoreductase subunit 2, chloroplastic from Asparagus officinalis (Garden asparagus).